The sequence spans 133 residues: MKNMAKKTNTRPKRRQRKNIDSGVAHIRSTFNNTIVTITDPHGNAISWASAGALGFKGSRKSTPFAAQMAAESAAKTAMEHGMKTIEVSVKGPGAGREAAIRSLQAVGLEVNMIKDVTPVPHNGCRPPKRRRV.

This sequence belongs to the universal ribosomal protein uS11 family. Part of the 30S ribosomal subunit. Interacts with proteins S7 and S18. Binds to IF-3.

Its function is as follows. Located on the platform of the 30S subunit, it bridges several disparate RNA helices of the 16S rRNA. Forms part of the Shine-Dalgarno cleft in the 70S ribosome. The polypeptide is Small ribosomal subunit protein uS11 (Shouchella clausii (strain KSM-K16) (Alkalihalobacillus clausii)).